A 245-amino-acid chain; its full sequence is tRNA1(Val) (adenine(37)-N6)-methyltransferase (245 aa).

This sequence belongs to the methyltransferase superfamily. tRNA (adenine-N(6)-)-methyltransferase family.

It localises to the cytoplasm. The catalysed reaction is adenosine(37) in tRNA1(Val) + S-adenosyl-L-methionine = N(6)-methyladenosine(37) in tRNA1(Val) + S-adenosyl-L-homocysteine + H(+). Its function is as follows. Specifically methylates the adenine in position 37 of tRNA(1)(Val) (anticodon cmo5UAC). This Shigella sonnei (strain Ss046) protein is tRNA1(Val) (adenine(37)-N6)-methyltransferase.